Here is a 426-residue protein sequence, read N- to C-terminus: Cdc25-like protein phosphatase twine (426 aa).

Positions Met-1–Pro-27 are disordered. In terms of domain architecture, Rhodanese spans Ser-265–Gln-371. The active site involves Cys-318.

It belongs to the MPI phosphatase family. Expressed in developing male and female germ cells.

It catalyses the reaction O-phospho-L-tyrosyl-[protein] + H2O = L-tyrosyl-[protein] + phosphate. Its function is as follows. Required during meiosis. Regulates the transition from the extended G2 phase to the onset of the first meiotic division. The protein is Cdc25-like protein phosphatase twine (twe) of Drosophila melanogaster (Fruit fly).